The sequence spans 329 residues: MRLCKFTALSSLLFSLLLLSASAEQCGSQAGGARCPSGLCCSKFGWCGNTNDYCGPGNCQSQCPGGPTPTPPTPPGGGDLGSIISSSMFDQMLKHRNDNACQGKGFYSYNAFINAARSFPGFGTSGDTTARKREIAAFFAQTSHETTGGWATAPDGPYAWGYCWLREQGSPGDYCTPSGQWPCAPGRKYFGRGPIQISHNYNYGPCGRAIGVDLLNNPDLVATDPVISFKSALWFWMTPQSPKPSCHDVIIGRWQPSAGDRAANRLPGFGVITNIINGGLECGRGTDSRVQDRIGFYRRYCSILGVSPGDNLDCGNQRSFGNGLLVDTM.

The signal sequence occupies residues 1-23 (MRLCKFTALSSLLFSLLLLSASA). The Chitin-binding type-1 domain maps to 24-65 (EQCGSQAGGARCPSGLCCSKFGWCGNTNDYCGPGNCQSQCPG). 4 cysteine pairs are disulfide-bonded: Cys-26–Cys-41, Cys-35–Cys-47, Cys-40–Cys-54, and Cys-59–Cys-63. Pro-67 bears the 4-hydroxyproline; partial mark. Residues Pro-69, Pro-71, Pro-72, and Pro-74 each carry the 4-hydroxyproline modification. A 4-hydroxyproline; partial modification is found at Pro-75. Intrachain disulfides connect Cys-101/Cys-163, Cys-175/Cys-183, and Cys-282/Cys-314. The Proton donor role is filled by Glu-145. Residues 323–329 (GLLVDTM) constitute a propeptide, removed in mature form.

The protein belongs to the glycosyl hydrolase 19 family. Chitinase class I subfamily. In terms of processing, the 4-hydroxyproline residues are not glycosylated in this plant vacuolar protein.

It localises to the vacuole. It carries out the reaction Random endo-hydrolysis of N-acetyl-beta-D-glucosaminide (1-&gt;4)-beta-linkages in chitin and chitodextrins.. In terms of biological role, defense against chitin-containing fungal pathogens. The chain is Endochitinase A (CHN48) from Nicotiana tabacum (Common tobacco).